The chain runs to 161 residues: Deoxyuridine 5'-triphosphate nucleotidohydrolase (161 aa).

Substrate-binding positions include 80-82, N93, 97-99, and K107; these read RSG and TVD.

It belongs to the dUTPase family. Mg(2+) serves as cofactor.

It carries out the reaction dUTP + H2O = dUMP + diphosphate + H(+). It participates in pyrimidine metabolism; dUMP biosynthesis; dUMP from dCTP (dUTP route): step 2/2. This enzyme is involved in nucleotide metabolism: it produces dUMP, the immediate precursor of thymidine nucleotides and it decreases the intracellular concentration of dUTP so that uracil cannot be incorporated into DNA. The sequence is that of Deoxyuridine 5'-triphosphate nucleotidohydrolase from Mesorhizobium japonicum (strain LMG 29417 / CECT 9101 / MAFF 303099) (Mesorhizobium loti (strain MAFF 303099)).